Here is a 299-residue protein sequence, read N- to C-terminus: Aliphatic sulfonates import ATP-binding protein SsuB (299 aa).

Residues 36–257 (LHVQQVIKRY…QHGSAAFAQI (222 aa)) form the ABC transporter domain. 68–75 (GRSGCGKS) is an ATP binding site.

This sequence belongs to the ABC transporter superfamily. Aliphatic sulfonates importer (TC 3.A.1.17.2) family. As to quaternary structure, the complex is composed of two ATP-binding proteins (SsuB), two transmembrane proteins (SsuC) and a solute-binding protein (SsuA).

The protein resides in the cell inner membrane. The catalysed reaction is ATP + H2O + aliphatic sulfonate-[sulfonate-binding protein]Side 1 = ADP + phosphate + aliphatic sulfonateSide 2 + [sulfonate-binding protein]Side 1.. In terms of biological role, part of the ABC transporter complex SsuABC involved in aliphatic sulfonates import. Responsible for energy coupling to the transport system. This is Aliphatic sulfonates import ATP-binding protein SsuB from Cupriavidus pinatubonensis (strain JMP 134 / LMG 1197) (Cupriavidus necator (strain JMP 134)).